A 139-amino-acid polypeptide reads, in one-letter code: Nucleoside diphosphate kinase (139 aa).

ATP contacts are provided by lysine 11, phenylalanine 59, arginine 87, threonine 93, arginine 104, and asparagine 114. Histidine 117 (pros-phosphohistidine intermediate) is an active-site residue.

The protein belongs to the NDK family. Homotetramer. Mg(2+) is required as a cofactor.

It localises to the cytoplasm. It catalyses the reaction a 2'-deoxyribonucleoside 5'-diphosphate + ATP = a 2'-deoxyribonucleoside 5'-triphosphate + ADP. It carries out the reaction a ribonucleoside 5'-diphosphate + ATP = a ribonucleoside 5'-triphosphate + ADP. Its function is as follows. Major role in the synthesis of nucleoside triphosphates other than ATP. The ATP gamma phosphate is transferred to the NDP beta phosphate via a ping-pong mechanism, using a phosphorylated active-site intermediate. This chain is Nucleoside diphosphate kinase, found in Coxiella burnetii (strain CbuK_Q154) (Coxiella burnetii (strain Q154)).